Reading from the N-terminus, the 342-residue chain is P2Y purinoceptor 12 (342 aa).

The Extracellular portion of the chain corresponds to 1-27; it reads MQAIDNLTSAPGNTSLCTRDYKITQVL. Asn6 and Asn13 each carry an N-linked (GlcNAc...) asparagine glycan. Disulfide bonds link Cys17–Cys270 and Cys97–Cys175. The chain crosses the membrane as a helical span at residues 28-50; that stretch reads FPLLYTVLFFVGLITNSLAMRIF. Topologically, residues 51–61 are cytoplasmic; sequence FQIRSKSNFII. A phosphoserine mark is found at Ser55 and Ser57. The chain crosses the membrane as a helical span at residues 62–82; the sequence is FLKNTVISDLLMILTFPFKIL. Residues 83–97 lie on the Extracellular side of the membrane; sequence SDAKLGAGPLRTFVC. ADP-binding residues include Arg93, Cys97, and Tyr105. The chain crosses the membrane as a helical span at residues 98–118; the sequence is QVTSVIFYFTMYISISFLGLI. Residues 119-142 lie on the Cytoplasmic side of the membrane; that stretch reads TIDRYQKTTRPFKTSNPKNLLGAK. Residues 143–162 traverse the membrane as a helical segment; it reads ILSVLIWAFMFLLSLPNMIL. ADP contacts are provided by residues 156 to 159, 175 to 179, His187, and Asn191; these read SLPN and CSFLK. The Extracellular segment spans residues 163 to 185; that stretch reads TNRRPRDKNVKKCSFLKSEFGLV. The chain crosses the membrane as a helical span at residues 186–207; sequence WHEIVNYICQVIFWINFLIVIV. Residues 208–233 are Cytoplasmic-facing; sequence CYTLITKELYRSYVRTRGVGKVPRKK. The chain crosses the membrane as a helical span at residues 234–259; that stretch reads VNVKVFIIIAVFFICFVPFHFARIPY. Residues 256-259, Gln263, and Lys280 contribute to the ADP site; that span reads RIPY. The Extracellular segment spans residues 260 to 278; sequence TLSQTRDVFDCAAENTLFY. Residues 279-298 traverse the membrane as a helical segment; the sequence is VKESTLWLTSLNACLDPFIY. The Cytoplasmic portion of the chain corresponds to 299 to 342; the sequence is FFLCKSFRNSLISMLKCPNSATSQSQDNRKKEQDGGDPNEETPM. The segment at 317–342 is disordered; sequence NSATSQSQDNRKKEQDGGDPNEETPM. A compositionally biased stretch (acidic residues) spans 333–342; it reads GGDPNEETPM.

Belongs to the G-protein coupled receptor 1 family.

The protein resides in the cell membrane. Its function is as follows. Receptor for ADP and ATP coupled to G-proteins that inhibit the adenylyl cyclase second messenger system. Required for normal platelet aggregation and blood coagulation. The chain is P2Y purinoceptor 12 (P2RY12) from Macaca fascicularis (Crab-eating macaque).